Consider the following 498-residue polypeptide: Probable malate:quinone oxidoreductase 2 (498 aa).

This sequence belongs to the MQO family. FAD serves as cofactor.

It carries out the reaction (S)-malate + a quinone = a quinol + oxaloacetate. It functions in the pathway carbohydrate metabolism; tricarboxylic acid cycle; oxaloacetate from (S)-malate (quinone route): step 1/1. In Staphylococcus epidermidis (strain ATCC 12228 / FDA PCI 1200), this protein is Probable malate:quinone oxidoreductase 2.